Here is a 309-residue protein sequence, read N- to C-terminus: Glutaminase (309 aa).

Residues serine 65, asparagine 117, glutamate 162, asparagine 169, tyrosine 193, tyrosine 245, and valine 263 each contribute to the substrate site.

Belongs to the glutaminase family. Homotetramer.

The catalysed reaction is L-glutamine + H2O = L-glutamate + NH4(+). This is Glutaminase from Geobacillus thermodenitrificans (strain NG80-2).